Here is a 310-residue protein sequence, read N- to C-terminus: Acetyl-coenzyme A carboxylase carboxyl transferase subunit alpha (310 aa).

The CoA carboxyltransferase C-terminal domain occupies 36 to 286; that stretch reads NLEKEITKTY…GEYILKQLDE (251 aa).

It belongs to the AccA family. As to quaternary structure, acetyl-CoA carboxylase is a heterohexamer composed of biotin carboxyl carrier protein (AccB), biotin carboxylase (AccC) and two subunits each of ACCase subunit alpha (AccA) and ACCase subunit beta (AccD).

The protein resides in the cytoplasm. It catalyses the reaction N(6)-carboxybiotinyl-L-lysyl-[protein] + acetyl-CoA = N(6)-biotinyl-L-lysyl-[protein] + malonyl-CoA. It functions in the pathway lipid metabolism; malonyl-CoA biosynthesis; malonyl-CoA from acetyl-CoA: step 1/1. In terms of biological role, component of the acetyl coenzyme A carboxylase (ACC) complex. First, biotin carboxylase catalyzes the carboxylation of biotin on its carrier protein (BCCP) and then the CO(2) group is transferred by the carboxyltransferase to acetyl-CoA to form malonyl-CoA. The chain is Acetyl-coenzyme A carboxylase carboxyl transferase subunit alpha from Campylobacter fetus subsp. fetus (strain 82-40).